A 195-amino-acid polypeptide reads, in one-letter code: Probable GTP-binding protein EngB (195 aa).

An EngB-type G domain is found at 22 to 195 (GLPEIALAGR…WGAIKKMINR (174 aa)). Residues 30–37 (GRSNVGKS), 57–61 (GKTQT), 75–78 (DVPG), 142–145 (TKAD), and 174–176 (FSS) each bind GTP. Residues Ser-37 and Thr-59 each coordinate Mg(2+).

It belongs to the TRAFAC class TrmE-Era-EngA-EngB-Septin-like GTPase superfamily. EngB GTPase family. It depends on Mg(2+) as a cofactor.

Functionally, necessary for normal cell division and for the maintenance of normal septation. Its function is as follows. Binds GTP and GDP. The protein is Probable GTP-binding protein EngB of Bacillus subtilis (strain 168).